The sequence spans 423 residues: Glycine-rich protein 1 (423 aa).

The first 20 residues, 1 to 20 (MKKICLTFVFLLSLFPIYSS), serve as a signal peptide directing secretion. 4 disordered regions span residues 28–47 (TIES…AGPA), 78–133 (DDDN…SKKN), 159–219 (KGGS…GAGA), and 236–288 (GASA…ASAG). Positions 31–42 (SGSSKSSGSSVG) are enriched in low complexity. Composition is skewed to basic and acidic residues over residues 81–93 (NKDK…DGKT) and 102–111 (QNGDDVKSDN). A compositionally biased stretch (gly residues) spans 159-172 (KGGSANNGGEGGAT). The span at 173-183 (SAGSAGATSGA) shows a compositional bias: low complexity. Composition is skewed to gly residues over residues 205-219 (GAGG…GAGA) and 236-247 (GASAGAGAGGAQ). Residues 248 to 284 (GDAEAASAGSTAGSTSSGGAAASGASSGAGSSDSGQG) are compositionally biased toward low complexity.

In terms of tissue distribution, nacreous layer of shell (at protein level).

Its subcellular location is the secreted. In Pinctada maxima (Silver-lipped pearl oyster), this protein is Glycine-rich protein 1.